Reading from the N-terminus, the 201-residue chain is FMN-dependent NADH:quinone oxidoreductase (201 aa).

FMN-binding positions include Met-92–Leu-95 and Ser-136–Gly-139.

The protein belongs to the azoreductase type 1 family. In terms of assembly, homodimer. Requires FMN as cofactor.

It catalyses the reaction 2 a quinone + NADH + H(+) = 2 a 1,4-benzosemiquinone + NAD(+). It carries out the reaction N,N-dimethyl-1,4-phenylenediamine + anthranilate + 2 NAD(+) = 2-(4-dimethylaminophenyl)diazenylbenzoate + 2 NADH + 2 H(+). Quinone reductase that provides resistance to thiol-specific stress caused by electrophilic quinones. In terms of biological role, also exhibits azoreductase activity. Catalyzes the reductive cleavage of the azo bond in aromatic azo compounds to the corresponding amines. This is FMN-dependent NADH:quinone oxidoreductase from Coprothermobacter proteolyticus (strain ATCC 35245 / DSM 5265 / OCM 4 / BT).